A 158-amino-acid polypeptide reads, in one-letter code: Ribonuclease HI (158 aa).

An RNase H type-1 domain is found at 3 to 144 (ELKLIHIFTD…CDQLARAAAE (142 aa)). Mg(2+)-binding residues include aspartate 12, glutamate 50, aspartate 72, and aspartate 136.

The protein belongs to the RNase H family. In terms of assembly, monomer. It depends on Mg(2+) as a cofactor.

It is found in the cytoplasm. It catalyses the reaction Endonucleolytic cleavage to 5'-phosphomonoester.. In terms of biological role, endonuclease that specifically degrades the RNA of RNA-DNA hybrids. The protein is Ribonuclease HI of Shewanella oneidensis (strain ATCC 700550 / JCM 31522 / CIP 106686 / LMG 19005 / NCIMB 14063 / MR-1).